Reading from the N-terminus, the 393-residue chain is Putative odorant receptor 69a, isoform B (393 aa).

Topologically, residues 1 to 39 (MQLEDFMRYPDLVCQAAQLPRYTWNGRRSLEVKRNLAKR) are cytoplasmic. A helical transmembrane segment spans residues 40–60 (IIFWLGAVNLVYHNIGCVMYG). The Extracellular segment spans residues 61-69 (YFGDGRTKD). A helical membrane pass occupies residues 70–90 (PIAYLAELASVASMLGFTIVG). Over 91–138 (TLNLWKMLSLKTHFENLLNEFEELFQLIKHRAYRIHHYQEKYTRHIRN) the chain is Cytoplasmic. Residues 139–159 (TFIFHTSAVVYYNSLPILLMI) form a helical membrane-spanning segment. Residues 160-208 (REHFSNSQQLGYRIQSNTWYPWQVQGSIPGFFAAVACQIFSCQTNMCVN) are Extracellular-facing. The chain crosses the membrane as a helical span at residues 209–229 (MFIQFLINFFGIQLEIHFDGL). The Cytoplasmic segment spans residues 230–269 (ARQLETIDARNPHAKDQLKYLIVYHTKLLNLADRVNRSFN). Residues 270-290 (FTFLISLSVSMISNCFLAFSM) form a helical membrane-spanning segment. Over 291 to 305 (TMFDFGTSLKHLLGL) the chain is Extracellular. The helical transmembrane segment at 306–326 (LLFITYNFSMCRSGTHLILTS) threads the bilayer. Topologically, residues 327–365 (GKVLPAAFYNNWYEGDLVYRRMLLILMMRATKPYMWKTY) are cytoplasmic. A helical membrane pass occupies residues 366 to 386 (KLAPVSITTYMATLKFSYQMF). Residues 387-393 (TCVRSLK) lie on the Extracellular side of the membrane.

The protein belongs to the insect chemoreceptor superfamily. Heteromeric odorant receptor channel (TC 1.A.69) family. Or49a subfamily. Interacts with Orco. Complexes exist early in the endomembrane system in olfactory sensory neurons (OSNs), coupling these complexes to the conserved ciliary trafficking pathway. Expressed in olfactory sensory neurons in the antenna.

The protein localises to the cell membrane. Odorant receptor which mediates acceptance or avoidance behavior, depending on its substrates. The odorant receptor repertoire encodes a large collection of odor stimuli that vary widely in identity, intensity, and duration. May form a complex with Orco to form odorant-sensing units, providing sensitive and prolonged odorant signaling and calcium permeability. This is Putative odorant receptor 69a, isoform B (Or69a) from Drosophila melanogaster (Fruit fly).